The sequence spans 125 residues: MPTISQLVRKPREVSIIKSKSPALENCPQRRGVCTRVYTTTPKKPNSALRKVAKVRLTNGYEVISYIGGEGHNLQEHSVVLVRGGRVKDLPGVRYHIVRGSLDLQGVKDRKQARSKYGAKRPKKA.

Asp-89 carries the post-translational modification 3-methylthioaspartic acid.

Belongs to the universal ribosomal protein uS12 family. As to quaternary structure, part of the 30S ribosomal subunit. Contacts proteins S8 and S17. May interact with IF1 in the 30S initiation complex.

Functionally, with S4 and S5 plays an important role in translational accuracy. Interacts with and stabilizes bases of the 16S rRNA that are involved in tRNA selection in the A site and with the mRNA backbone. Located at the interface of the 30S and 50S subunits, it traverses the body of the 30S subunit contacting proteins on the other side and probably holding the rRNA structure together. The combined cluster of proteins S8, S12 and S17 appears to hold together the shoulder and platform of the 30S subunit. The polypeptide is Small ribosomal subunit protein uS12 (Bordetella avium (strain 197N)).